An 81-amino-acid polypeptide reads, in one-letter code: Short neurotoxin 2 (81 aa).

The N-terminal stretch at 1–21 is a signal peptide; it reads MKTLLLTLVVVTIVCLDLGYT. 4 disulfide bridges follow: C24/C43, C38/C60, C62/C73, and C74/C79.

This sequence belongs to the three-finger toxin family. Short-chain subfamily. Type I alpha-neurotoxin sub-subfamily. In terms of tissue distribution, expressed by the venom gland.

The protein resides in the secreted. Binds to muscle nicotinic acetylcholine receptor (nAChR) and inhibit acetylcholine from binding to the receptor, thereby impairing neuromuscular transmission. This chain is Short neurotoxin 2, found in Tropidechis carinatus (Australian rough-scaled snake).